The chain runs to 148 residues: Ribosome maturation factor RimP (148 aa).

This sequence belongs to the RimP family.

Its subcellular location is the cytoplasm. Required for maturation of 30S ribosomal subunits. This chain is Ribosome maturation factor RimP, found in Thermosipho africanus (strain TCF52B).